The chain runs to 789 residues: Cadherin-10 (789 aa).

A signal peptide spans 1-22 (MTIQQVLLLLLLWMWLLHPCRT). Positions 23–54 (EMLFRRTPDLRPKGFVGRTSGSDGKALHRQKR) are excised as a propeptide. 5 Cadherin domains span residues 55 to 160 (GWMW…EPTF), 161 to 269 (PEEI…PPRF), 270 to 384 (PQST…PPVF), 385 to 487 (SRSS…DNAP), and 488 to 606 (QFAV…LLLP). Residues 55 to 606 (GWMWNQFFLL…SCNAEALLLP (552 aa)) lie on the Extracellular side of the membrane. N256 carries N-linked (GlcNAc...) asparagine glycosylation. N438, N456, and N534 each carry an N-linked (GlcNAc...) asparagine glycan. The chain crosses the membrane as a helical span at residues 607–634 (AGLSTGALIAILLCIIILLVIVVLFAAL). At 635–789 (KRQRKKEPLI…GGGESDKDAS (155 aa)) the chain is on the cytoplasmic side.

The protein resides in the cell membrane. In terms of biological role, cadherins are calcium-dependent cell adhesion proteins. They preferentially interact with themselves in a homophilic manner in connecting cells; cadherins may thus contribute to the sorting of heterogeneous cell types. This chain is Cadherin-10 (CDH10), found in Gallus gallus (Chicken).